The primary structure comprises 373 residues: Leucine aminopeptidase 1 (373 aa).

Positions 1 to 18 are cleaved as a signal peptide; it reads MKLLSVLALSATASSVLG. A propeptide spanning residues 19–75 is cleaved from the precursor; that stretch reads ASIPVDTRAEKFLIELAPGETRWVTEEEKWALKESGQDFFDITDEEVGFTAAVAQPA. Positions 176 and 195 each coordinate Zn(2+). The N-linked (GlcNAc...) asparagine glycan is linked to N196. 2 residues coordinate Zn(2+): E234 and D261. An N-linked (GlcNAc...) asparagine glycan is attached at N288. An intrachain disulfide couples C310 to C314. Residue H343 participates in Zn(2+) binding. N348 carries an N-linked (GlcNAc...) asparagine glycan.

Belongs to the peptidase M28 family. M28E subfamily. As to quaternary structure, monomer. Zn(2+) is required as a cofactor.

The protein resides in the secreted. In terms of biological role, extracellular aminopeptidase that allows assimilation of proteinaceous substrates. In Arthroderma gypseum (strain ATCC MYA-4604 / CBS 118893) (Microsporum gypseum), this protein is Leucine aminopeptidase 1 (LAP1).